The primary structure comprises 437 residues: Adenylosuccinate synthetase (437 aa).

GTP is bound by residues 12–18 (GDEGKGK) and 40–42 (GHT). The Proton acceptor role is filled by Asp13. Residues Asp13 and Gly40 each coordinate Mg(2+). IMP contacts are provided by residues 13 to 16 (DEGK), 38 to 41 (NAGH), Thr131, Arg145, Gln226, Thr241, and Arg305. His41 serves as the catalytic Proton donor. 301–307 (ATTGRRR) provides a ligand contact to substrate. GTP-binding positions include Arg307, 333–335 (KLD), and 415–417 (SVG).

It belongs to the adenylosuccinate synthetase family. In terms of assembly, homodimer. Mg(2+) serves as cofactor.

The protein localises to the cytoplasm. It catalyses the reaction IMP + L-aspartate + GTP = N(6)-(1,2-dicarboxyethyl)-AMP + GDP + phosphate + 2 H(+). It participates in purine metabolism; AMP biosynthesis via de novo pathway; AMP from IMP: step 1/2. In terms of biological role, plays an important role in the de novo pathway of purine nucleotide biosynthesis. Catalyzes the first committed step in the biosynthesis of AMP from IMP. This chain is Adenylosuccinate synthetase, found in Desulfotalea psychrophila (strain LSv54 / DSM 12343).